Here is a 466-residue protein sequence, read N- to C-terminus: Adenosylhomocysteinase (466 aa).

Residues Thr-57, Asp-132, and Glu-192 each coordinate substrate. 193 to 195 provides a ligand contact to NAD(+); that stretch reads TTT. Substrate is bound by residues Lys-222 and Asp-226. NAD(+) is bound by residues Asn-227, 256–261, Glu-279, Asn-314, 335–337, and Asn-380; these read GYGDVG and IGH.

The protein belongs to the adenosylhomocysteinase family. It depends on NAD(+) as a cofactor.

The protein localises to the cytoplasm. It catalyses the reaction S-adenosyl-L-homocysteine + H2O = L-homocysteine + adenosine. The protein operates within amino-acid biosynthesis; L-homocysteine biosynthesis; L-homocysteine from S-adenosyl-L-homocysteine: step 1/1. Functionally, may play a key role in the regulation of the intracellular concentration of adenosylhomocysteine. The chain is Adenosylhomocysteinase from Rhizobium etli (strain CIAT 652).